A 1076-amino-acid chain; its full sequence is Ribosome quality control complex subunit NEMF (1076 aa).

Thr-7 is modified (phosphothreonine). Residues 296 to 359 are a coiled coil; the sequence is VDEFYSKIEG…LIEMNLQIVD (64 aa). Position 417 is a phosphoserine (Ser-417). The segment at 420-453 is disordered; it reads EDDDVDGDVNVEKNETEPPKGKKKKQKNKQLQKP. A compositionally biased stretch (basic and acidic residues) spans 429 to 439; that stretch reads NVEKNETEPPK. Positions 440–449 are enriched in basic residues; the sequence is GKKKKQKNKQ. Residues 483-514 are a coiled coil; the sequence is AAKKTQKTVEAAEKAFKSAEKKTKQTLKEVQT. Composition is skewed to acidic residues over residues 691 to 710 and 742 to 754; these read ISEE…EDKE and LIQE…EGEY. 2 disordered regions span residues 691–715 and 742–972; these read ISEE…HETP and LIQE…DLDQ. 3 positions are modified to phosphoserine: Ser-747, Ser-748, and Ser-763. Positions 755 to 768 are enriched in basic and acidic residues; the sequence is EEVRKDQDSVGEMK. Positions 777-795 are enriched in polar residues; that stretch reads YPDTTIDLSHLQPQRSIQK. Ser-831 is modified (phosphoserine). The span at 839-854 shows a compositional bias: basic and acidic residues; the sequence is LEGKDKEKESTVHIET. A coiled-coil region spans residues 869-894; the sequence is KRGQKSKMKKMKEKYKDQDEEDRELI. Positions 870 to 881 are enriched in basic residues; it reads RGQKSKMKKMKE. The segment covering 937–965 has biased composition (basic and acidic residues); sequence DNIKKETPFLEVITHELQDFAVDDPHDDK.

This sequence belongs to the NEMF family. As to quaternary structure, component of the ribosome quality control complex (RQC), composed of the E3 ubiquitin ligase LTN1, TCF25 and NEMF associated with the 60S ribosomal subunit. The complex probably also contains VCP/p97 and its ubiquitin-binding cofactors. Interacts (via its N-terminus) with XPO1. As to expression, expressed in brain, heart, liver, lung, spleen, and skeletal muscle. Also expressed at lower levels in stomach and testis.

The protein localises to the cytoplasm. The protein resides in the cytosol. Its subcellular location is the nucleus. In terms of biological role, key component of the ribosome quality control complex (RQC), a ribosome-associated complex that mediates the extraction of incompletely synthesized nascent chains from stalled ribosomes as well as their ubiquitin-mediated proteasomal degradation. Thereby, frees 60S subunit ribosomes from the stalled translation complex and prevents the accumulation of nascent polypeptide chains that are potentially toxic for the cell. Within the RQC complex, NEMF specifically binds stalled 60S ribosomal subunits by recognizing an exposed, nascent chain-conjugated tRNA moiety and promotes the recruitment of LTN1 to stalled 60S subunits. Following binding to stalled 60S ribosomal subunits, NEMF mediates CAT tailing by recruiting alanine-charged tRNA to the A-site and directing the elongation of stalled nascent chains independently of mRNA or 40S subunits, leading to non-templated C-terminal alanine extensions (CAT tails). Mainly recruits alanine-charged tRNAs, but can also other amino acid-charged tRNAs. CAT tailing is required to promote ubiquitination of stalled nascent chains by different E3 ubiquitin-protein ligases. In the canonical RQC pathway (RQC-L), CAT tailing facilitates LTN1-dependent ubiquitination by exposing lysine residues that would otherwise remain buried in the ribosomal exit tunnel. In the alternative RQC pathway (RQC-C) CAT tailing creates an C-degron mainly composed of alanine that is recognized by the CRL2(KLHDC10) and RCHY1/PIRH2 E3 ligases, leading to ubiquitination and degradation of stalled nascent chains. NEMF may also indirectly play a role in nuclear export. In Homo sapiens (Human), this protein is Ribosome quality control complex subunit NEMF.